The chain runs to 653 residues: Chaperone protein DnaK (653 aa).

A Phosphothreonine; by autocatalysis modification is found at threonine 200. The disordered stretch occupies residues 615 to 653; it reads AEAAAAGAAGAGGAGASAGGASQQQDDVVDAEFKEVKKD. Residues 623–632 show a composition bias toward gly residues; sequence AGAGGAGASA.

The protein belongs to the heat shock protein 70 family.

Its function is as follows. Acts as a chaperone. The polypeptide is Chaperone protein DnaK (Paraburkholderia xenovorans (strain LB400)).